The chain runs to 481 residues: Protein NRT1/ PTR FAMILY 1.3 (481 aa).

Transmembrane regions (helical) follow at residues 32–52 (LAYFGLVPNMILFLTVEYGMG), 57–77 (ANILFLWSAATNFFPLVGAFI), 88–108 (IGFGSSISLTGMVLLWLTTII), 124–144 (LLKSVLLYSFFALTAIGAGGV), 173–193 (FNWYYFSVMVACFLSQSLLVF), 202–222 (IGFGVSVAAMALSVALFFAAS), 259–279 (IWSTGIILSLVTACQVSFIVL), 302–322 (IFLVISFLLFLGLYDLVIVPL), 333–353 (LGVMVRMWAGYVISVLCISAL), 374–394 (AMWLLPYMILGGIAEALNTIA), 422–442 (ASLISSWIITIVDVTTYGSWI), and 451–471 (LDYYYWLLVGLSLLNVLYFVW).

This sequence belongs to the major facilitator superfamily. Proton-dependent oligopeptide transporter (POT/PTR) (TC 2.A.17) family. In terms of tissue distribution, expressed in roots.

The protein resides in the membrane. This is Protein NRT1/ PTR FAMILY 1.3 (NPF1.3) from Arabidopsis thaliana (Mouse-ear cress).